Reading from the N-terminus, the 410-residue chain is Tryptophan synthase beta chain (410 aa).

N6-(pyridoxal phosphate)lysine is present on Lys100.

Belongs to the TrpB family. In terms of assembly, tetramer of two alpha and two beta chains. Pyridoxal 5'-phosphate serves as cofactor.

The enzyme catalyses (1S,2R)-1-C-(indol-3-yl)glycerol 3-phosphate + L-serine = D-glyceraldehyde 3-phosphate + L-tryptophan + H2O. It functions in the pathway amino-acid biosynthesis; L-tryptophan biosynthesis; L-tryptophan from chorismate: step 5/5. Functionally, the beta subunit is responsible for the synthesis of L-tryptophan from indole and L-serine. This Pyrobaculum aerophilum (strain ATCC 51768 / DSM 7523 / JCM 9630 / CIP 104966 / NBRC 100827 / IM2) protein is Tryptophan synthase beta chain.